The chain runs to 155 residues: Small ribosomal subunit protein uS7 (155 aa).

This sequence belongs to the universal ribosomal protein uS7 family. In terms of assembly, part of the 30S ribosomal subunit. Contacts proteins S9 and S11.

Functionally, one of the primary rRNA binding proteins, it binds directly to 16S rRNA where it nucleates assembly of the head domain of the 30S subunit. Is located at the subunit interface close to the decoding center, probably blocks exit of the E-site tRNA. The polypeptide is Small ribosomal subunit protein uS7 (Chlorobium phaeobacteroides (strain BS1)).